The sequence spans 804 residues: Probable protein phosphatase 2C 18 (804 aa).

Residues D19–I39 form a helical membrane-spanning segment. The 306-residue stretch at K129–F434 folds into the PPM-type phosphatase domain. 4 residues coordinate Mn(2+): D165, G166, Q384, and E425. 4 disordered regions span residues S460 to A509, D564 to S599, P623 to V653, and V675 to P804. A compositionally biased stretch (low complexity) spans G468 to S499. Positions D628–N637 are enriched in polar residues. Low complexity predominate over residues T638–R647. Residues L713–V734 are compositionally biased toward polar residues. A compositionally biased stretch (low complexity) spans D776 to V789. The segment covering A790 to P804 has biased composition (acidic residues).

Belongs to the PP2C family. Mg(2+) serves as cofactor. It depends on Mn(2+) as a cofactor.

Its subcellular location is the membrane. It carries out the reaction O-phospho-L-seryl-[protein] + H2O = L-seryl-[protein] + phosphate. The catalysed reaction is O-phospho-L-threonyl-[protein] + H2O = L-threonyl-[protein] + phosphate. The chain is Probable protein phosphatase 2C 18 from Oryza sativa subsp. japonica (Rice).